The chain runs to 525 residues: MATLLRSLALFKRNKDKPPITSGSGGAIRGIKHIIIVPIPGDSSITTRSRLLDRLVRLIGNPDVSGPKLTGALIGILSLFVESPGQLIQRITDDPDVSIRLLEVVQSDQSQSGLTFASRGTNMEDEADQYFSHDDPISSDQSRFGWFGNKEISDIEVQDPEGFNMILGTILAQIWVLLAKAVTAPDTAADSELRRWIKYTQQRRVVGEFRLERKWLDVVRNRIAEDLSLRRFMVALILDIKRTPGNKPRIAEMICDIDTYIVEAGLASFILTIKFGIETMYPALGLHEFAGELSTLESLMNLYQQMGETAPYMVILENSIQNKFSAGSYPLLWSYAMGVGVELENSMGGLNFGRSYFDPAYFRLGQEMVRRSAGKVSSTLASELGITAEDARLVSEIAMHTTEDKISRAVGPRQAQVSFLHGDQSENELPRLGGKEDRRVKQSRGEARESYRETGPSRASDARAAHLPTGTPLDIDTATESSQDPQDSRRSADALLRLQAMAGISEEQGSDTDTPIVYNDRNLLD.

Residues 1-36 are homomultimerization; sequence MATLLRSLALFKRNKDKPPITSGSGGAIRGIKHIII. Residues 1–375 are RNA packaging and organization of the helical nucleocapsid; that stretch reads MATLLRSLAL…QEMVRRSAGK (375 aa). The segment at 1 to 403 is ncore; it reads MATLLRSLAL…VSEIAMHTTE (403 aa). Positions 70-77 match the Nuclear localization signal motif; it reads TGALIGIL. 4 residues coordinate RNA: K180, R195, Q202, and Y260. Phosphothreonine; by host is present on T279. N351 lines the RNA pocket. The homomultimerization stretch occupies residues 373-391; that stretch reads AGKVSSTLASELGITAEDA. A ntail region spans residues 404 to 525; the sequence is DKISRAVGPR…IVYNDRNLLD (122 aa). The segment at 418–525 is disordered; it reads SFLHGDQSEN…IVYNDRNLLD (108 aa). The Nuclear export signal motif lies at 425–440; that stretch reads SENELPRLGGKEDRRV. The span at 433-452 shows a compositional bias: basic and acidic residues; sequence GGKEDRRVKQSRGEARESYR. An interaction with the phosphoprotein region spans residues 477-505; sequence TATESSQDPQDSRRSADALLRLQAMAGIS.

This sequence belongs to the paramyxoviruses nucleocapsid family. In terms of assembly, homomultimer; forms the nucleocapsid. Binds to viral genomic RNA. N0 interacts (via Ncore) with the phosphoprotein (via N-terminus); this interaction allows P to chaperon N0 to avoid N polymerization and non-specific RNA binding before encapsidation. Interacts (via the Ntail) as N-RNA template with the phosphoprotein (via C-terminus XD); this interaction maintains the P/L complex anchored to the nucleocapsid template during the sequential transcription. Interacts with the phosphoprotein; this interaction leads to the formation of membraneless organelles that function as viral replication factories. Interacts with human FCGR2B protein. Interacts with human PPIA/CYPA and PPIB/CYPB. Post-translationally, phosphorylation at Thr-279 is required for the formation of the nucleocapsid.

It localises to the virion. It is found in the host cytoplasm. The protein resides in the host nucleus. In terms of biological role, forms the helical nucleocapsid (NC) in a ratio of 1 N per 6 ribonucleotides, protecting the genome from nucleases. The nucleocapsid (NC) has a helical structure with either 12.35 or 11.64 N per turn, approximately 20 nm in diameter, with a hollow central cavity approximately 5 nm in diameter. The encapsidated genomic RNA serves as template for transcription and replication; encapsidation by N is coupled to RNA synthesis. Forms the encapsidation complex with the phosphoprotein protein P. Before encapsidation, the newly synthesized free N protein, so-called N0, is chaperoned by P. Participates, together with P, in the formation of viral factories (viroplasms), which are large inclusions in the host cytoplasm where replication takes place. N is released in the blood following lysis of measles infected cells, it interacts then with human FCGR2B on immune cells, inducing apoptosis and blocking inflammatory immune response. The polypeptide is Nucleoprotein (N) (Measles virus (strain Edmonston-Moraten vaccine) (MeV)).